The following is a 122-amino-acid chain: ATP synthase epsilon chain (122 aa).

Positions 97 to 112 are enriched in basic and acidic residues; that stretch reads EDLKSERELTRSRGDA. The segment at 97 to 122 is disordered; it reads EDLKSERELTRSRGDAALRATRRLNS.

The protein belongs to the ATPase epsilon chain family. In terms of assembly, F-type ATPases have 2 components, CF(1) - the catalytic core - and CF(0) - the membrane proton channel. CF(1) has five subunits: alpha(3), beta(3), gamma(1), delta(1), epsilon(1). CF(0) has three main subunits: a, b and c.

Its subcellular location is the cell membrane. Produces ATP from ADP in the presence of a proton gradient across the membrane. The sequence is that of ATP synthase epsilon chain from Corynebacterium aurimucosum (strain ATCC 700975 / DSM 44827 / CIP 107346 / CN-1) (Corynebacterium nigricans).